A 137-amino-acid polypeptide reads, in one-letter code: Nucleoside diphosphate kinase (137 aa).

Lysine 10, phenylalanine 59, arginine 87, threonine 93, arginine 104, and asparagine 114 together coordinate ATP. Residue histidine 117 is the Pros-phosphohistidine intermediate of the active site.

This sequence belongs to the NDK family. In terms of assembly, homotetramer. Requires Mg(2+) as cofactor.

It localises to the cytoplasm. It carries out the reaction a 2'-deoxyribonucleoside 5'-diphosphate + ATP = a 2'-deoxyribonucleoside 5'-triphosphate + ADP. The enzyme catalyses a ribonucleoside 5'-diphosphate + ATP = a ribonucleoside 5'-triphosphate + ADP. Functionally, major role in the synthesis of nucleoside triphosphates other than ATP. The ATP gamma phosphate is transferred to the NDP beta phosphate via a ping-pong mechanism, using a phosphorylated active-site intermediate. This Streptomyces griseus subsp. griseus (strain JCM 4626 / CBS 651.72 / NBRC 13350 / KCC S-0626 / ISP 5235) protein is Nucleoside diphosphate kinase.